Here is a 101-residue protein sequence, read N- to C-terminus: Cell division protein FtsB (101 aa).

Topologically, residues 1-3 (MRI) are cytoplasmic. A helical membrane pass occupies residues 4-21 (VIYSMLVLLIAIQYPLWL). Over 22-101 (GKGGWLKVYE…KSSDTQVTKQ (80 aa)) the chain is Periplasmic. Positions 33 to 53 (ERQVELQEAKNSLLALRNAKL) form a coiled coil.

The protein belongs to the FtsB family. In terms of assembly, part of a complex composed of FtsB, FtsL and FtsQ.

The protein resides in the cell inner membrane. Functionally, essential cell division protein. May link together the upstream cell division proteins, which are predominantly cytoplasmic, with the downstream cell division proteins, which are predominantly periplasmic. The protein is Cell division protein FtsB of Polynucleobacter necessarius subsp. necessarius (strain STIR1).